The primary structure comprises 734 residues: Photosystem I P700 chlorophyll a apoprotein A2 (734 aa).

Transmembrane regions (helical) follow at residues 46–69 (IFAS…FHVA), 135–158 (LYTG…LHLQ), 175–199 (LNHH…HVAI), 273–291 (IAHH…GHMY), 330–353 (LHFQ…QHMY), 369–395 (AALY…IFFI), 417–439 (AITS…LYVH), and 517–535 (FLVH…LILV). The [4Fe-4S] cluster site is built by cysteine 559 and cysteine 568. A run of 2 helical transmembrane segments spans residues 575–596 (AFYL…YWHW) and 643–665 (LSVW…MFLI). Chlorophyll a contacts are provided by histidine 654, methionine 662, and tyrosine 670. Tryptophan 671 contacts phylloquinone. Residues 707–727 (LVGLVHFSVGYIFTYAAFLIA) traverse the membrane as a helical segment.

Belongs to the PsaA/PsaB family. In terms of assembly, the PsaA/B heterodimer binds the P700 chlorophyll special pair and subsequent electron acceptors. PSI consists of a core antenna complex that captures photons, and an electron transfer chain that converts photonic excitation into a charge separation. The eukaryotic PSI reaction center is composed of at least 11 subunits. The cofactor is P700 is a chlorophyll a/chlorophyll a' dimer, A0 is one or more chlorophyll a, A1 is one or both phylloquinones and FX is a shared 4Fe-4S iron-sulfur center..

It localises to the plastid. The protein localises to the chloroplast thylakoid membrane. It catalyses the reaction reduced [plastocyanin] + hnu + oxidized [2Fe-2S]-[ferredoxin] = oxidized [plastocyanin] + reduced [2Fe-2S]-[ferredoxin]. Its function is as follows. PsaA and PsaB bind P700, the primary electron donor of photosystem I (PSI), as well as the electron acceptors A0, A1 and FX. PSI is a plastocyanin-ferredoxin oxidoreductase, converting photonic excitation into a charge separation, which transfers an electron from the donor P700 chlorophyll pair to the spectroscopically characterized acceptors A0, A1, FX, FA and FB in turn. Oxidized P700 is reduced on the lumenal side of the thylakoid membrane by plastocyanin. This is Photosystem I P700 chlorophyll a apoprotein A2 from Phalaenopsis aphrodite subsp. formosana (Moth orchid).